We begin with the raw amino-acid sequence, 117 residues long: Large ribosomal subunit protein uL18 (117 aa).

The protein belongs to the universal ribosomal protein uL18 family. Part of the 50S ribosomal subunit; part of the 5S rRNA/L5/L18/L25 subcomplex. Contacts the 5S and 23S rRNAs.

In terms of biological role, this is one of the proteins that bind and probably mediate the attachment of the 5S RNA into the large ribosomal subunit, where it forms part of the central protuberance. The chain is Large ribosomal subunit protein uL18 from Hydrogenovibrio crunogenus (strain DSM 25203 / XCL-2) (Thiomicrospira crunogena).